The chain runs to 212 residues: Ribosomal RNA small subunit methyltransferase G (212 aa).

S-adenosyl-L-methionine is bound by residues glycine 80, leucine 85, 131–132 (AE), and arginine 146.

The protein belongs to the methyltransferase superfamily. RNA methyltransferase RsmG family.

It is found in the cytoplasm. It carries out the reaction guanosine(527) in 16S rRNA + S-adenosyl-L-methionine = N(7)-methylguanosine(527) in 16S rRNA + S-adenosyl-L-homocysteine. In terms of biological role, specifically methylates the N7 position of guanine in position 527 of 16S rRNA. The polypeptide is Ribosomal RNA small subunit methyltransferase G (Xanthomonas campestris pv. campestris (strain B100)).